The primary structure comprises 2939 residues: Serine/threonine-protein kinase tel1 (2939 aa).

Disordered regions lie at residues 193 to 212 (GTSV…RAGS), 695 to 718 (PPED…AADS), and 859 to 886 (KTRR…ETRK). Residues 697-715 (EDSHKATSTDQPKREEIRA) show a composition bias toward basic and acidic residues. Residues 1869–2471 (IAAAAATRCG…MYQIWSGVKA (603 aa)) form the FAT domain. Positions 2577-2890 (FEPQMSIASG…DKKSTKNLNE (314 aa)) constitute a PI3K/PI4K catalytic domain. The G-loop stretch occupies residues 2583 to 2589 (IASGVSA). Residues 2755 to 2763 (GLGDRHGHN) are catalytic loop. The interval 2775 to 2799 (HIDLGVAFELGRILPVPELVPFRLT) is activation loop. Residues 2869-2894 (DVVEAEDERRAGDKKSTKNLNEPSEA) are disordered. The segment covering 2875–2884 (DERRAGDKKS) has biased composition (basic and acidic residues). Residues 2907–2939 (KTLSVMATVNDLINQATDERNLAVLFCGWAAYA) form the FATC domain.

The protein belongs to the PI3/PI4-kinase family. ATM subfamily. In terms of assembly, associates with DNA double-strand breaks.

The protein resides in the nucleus. Its subcellular location is the chromosome. The protein localises to the telomere. It catalyses the reaction L-seryl-[protein] + ATP = O-phospho-L-seryl-[protein] + ADP + H(+). The enzyme catalyses L-threonyl-[protein] + ATP = O-phospho-L-threonyl-[protein] + ADP + H(+). Functionally, serine/threonine protein kinase which activates checkpoint signaling upon genotoxic stresses such as ionizing radiation (IR), ultraviolet light (UV), or DNA replication stalling, thereby acting as a DNA damage sensor. Recognizes the substrate consensus sequence [ST]-Q. Phosphorylates histone H2A to form H2AS128ph (gamma-H2A) at sites of DNA damage, involved in the regulation of DNA damage response mechanism. Required for the control of telomere length and genome stability. The sequence is that of Serine/threonine-protein kinase tel1 (mus-21) from Neurospora crassa (strain ATCC 24698 / 74-OR23-1A / CBS 708.71 / DSM 1257 / FGSC 987).